We begin with the raw amino-acid sequence, 474 residues long: UDP-N-acetylmuramate--L-alanine ligase (474 aa).

Residue 119 to 125 coordinates ATP; that stretch reads GTHGKTT.

This sequence belongs to the MurCDEF family.

It localises to the cytoplasm. It catalyses the reaction UDP-N-acetyl-alpha-D-muramate + L-alanine + ATP = UDP-N-acetyl-alpha-D-muramoyl-L-alanine + ADP + phosphate + H(+). The protein operates within cell wall biogenesis; peptidoglycan biosynthesis. Its function is as follows. Cell wall formation. The polypeptide is UDP-N-acetylmuramate--L-alanine ligase (Jannaschia sp. (strain CCS1)).